A 74-amino-acid polypeptide reads, in one-letter code: Omega-conotoxin-like protein 1 (74 aa).

The first 20 residues, 1-20 (MSKFILLVCILLLTTNIVSA), serve as a signal peptide directing secretion. 3 cysteine pairs are disulfide-bonded: cysteine 24–cysteine 38, cysteine 31–cysteine 43, and cysteine 37–cysteine 50.

As to expression, highly expressed in brain. Is also found in hemolymph.

The impact of this protein on the neuronal activity of the honeybee brain is not known. It does not affect apparent movement or hatching of blowfly larvae. However, when injected into fish, it induces a strong reversible paralytic effect. In addition, the presence of this small peptide in the hemolymph of adult drones together with its induction after bacterial infection suggests that this peptide exhibits antibacterial activity. This peptide may act by inhibiting ion channels. In Apis mellifera (Honeybee), this protein is Omega-conotoxin-like protein 1.